Consider the following 301-residue polypeptide: Tyrosine recombinase XerC (301 aa).

Positions 1 to 85 (MELISLFKQY…ALRSFYRFLV (85 aa)) constitute a Core-binding (CB) domain. The 187-residue stretch at 106–292 (KLPHFFYEKE…TKEKLQESYR (187 aa)) folds into the Tyr recombinase domain. Residues Arg147, Lys171, His244, Arg247, and His270 contribute to the active site. Tyr279 serves as the catalytic O-(3'-phospho-DNA)-tyrosine intermediate.

This sequence belongs to the 'phage' integrase family. XerC subfamily. As to quaternary structure, forms a cyclic heterotetrameric complex composed of two molecules of XerC and two molecules of XerD.

It localises to the cytoplasm. Functionally, site-specific tyrosine recombinase, which acts by catalyzing the cutting and rejoining of the recombining DNA molecules. The XerC-XerD complex is essential to convert dimers of the bacterial chromosome into monomers to permit their segregation at cell division. It also contributes to the segregational stability of plasmids. The chain is Tyrosine recombinase XerC from Pediococcus pentosaceus (strain ATCC 25745 / CCUG 21536 / LMG 10740 / 183-1w).